Consider the following 299-residue polypeptide: Probable lipid kinase YegS-like (299 aa).

The region spanning 2-133 (SRSAGSFLIL…IDIAHVNDKT (132 aa)) is the DAGKc domain. ATP contacts are provided by residues T40, 66 to 72 (GDGTINE), and T95. Mg(2+)-binding residues include L215, D218, and L220. Residue E271 is the Proton acceptor of the active site.

Belongs to the diacylglycerol/lipid kinase family. YegS lipid kinase subfamily. Mg(2+) serves as cofactor. The cofactor is Ca(2+).

It is found in the cytoplasm. In terms of biological role, probably phosphorylates lipids; the in vivo substrate is unknown. The protein is Probable lipid kinase YegS-like of Cronobacter sakazakii (strain ATCC BAA-894) (Enterobacter sakazakii).